A 415-amino-acid polypeptide reads, in one-letter code: Protein fuzzy homolog (415 aa).

The protein belongs to the fuzzy family. As to quaternary structure, component of the CPLANE (ciliogenesis and planar polarity effectors) complex, composed of INTU, FUZ and WDPCP. Interacts with CPLANE1. Interacts with CPLANE2. Expressed in dermal and epidermal cells.

Its subcellular location is the cytoplasm. The protein resides in the cytoskeleton. It is found in the cilium basal body. In terms of biological role, probable planar cell polarity effector involved in cilium biogenesis. May regulate protein and membrane transport to the cilium. Proposed to function as core component of the CPLANE (ciliogenesis and planar polarity effectors) complex involved in the recruitment of peripheral IFT-A proteins to basal bodies. May regulate the morphogenesis of hair follicles which depends on functional primary cilia. Binds phosphatidylinositol 3-phosphate with highest affinity, followed by phosphatidylinositol 4-phosphate and phosphatidylinositol 5-phosphate. In Mus musculus (Mouse), this protein is Protein fuzzy homolog (Fuz).